The primary structure comprises 350 residues: tRNA uridine(34) hydroxylase (350 aa).

The Rhodanese domain occupies 146 to 240 (DDPDAVFIDM…YARKAREQGL (95 aa)). Cysteine 200 (cysteine persulfide intermediate) is an active-site residue. Residues 314 to 350 (PEEEQRRRRAGRENGNKIFNKSRGRLNTQLGIPDPAE) are disordered. Residues 316 to 328 (EEQRRRRAGRENG) are compositionally biased toward basic and acidic residues.

Belongs to the TrhO family.

The catalysed reaction is uridine(34) in tRNA + AH2 + O2 = 5-hydroxyuridine(34) in tRNA + A + H2O. Its function is as follows. Catalyzes oxygen-dependent 5-hydroxyuridine (ho5U) modification at position 34 in tRNAs. The chain is tRNA uridine(34) hydroxylase from Citrobacter koseri (strain ATCC BAA-895 / CDC 4225-83 / SGSC4696).